The chain runs to 397 residues: Elongation factor Tu (397 aa).

The tr-type G domain maps to 10 to 207 (KPHVNIGTIG…AVDTYIEEPK (198 aa)). The G1 stretch occupies residues 19–26 (GHVDHGKT). 19-26 (GHVDHGKT) contributes to the GTP binding site. Position 26 (Thr26) interacts with Mg(2+). Residues 60 to 64 (GITIN) form a G2 region. The G3 stretch occupies residues 81 to 84 (DCPG). GTP contacts are provided by residues 81-85 (DCPGH) and 136-139 (NKID). The tract at residues 136 to 139 (NKID) is G4. The tract at residues 177–179 (SAL) is G5.

Belongs to the TRAFAC class translation factor GTPase superfamily. Classic translation factor GTPase family. EF-Tu/EF-1A subfamily. As to quaternary structure, monomer.

The protein localises to the cytoplasm. It catalyses the reaction GTP + H2O = GDP + phosphate + H(+). Functionally, GTP hydrolase that promotes the GTP-dependent binding of aminoacyl-tRNA to the A-site of ribosomes during protein biosynthesis. The polypeptide is Elongation factor Tu (Metamycoplasma hominis (strain ATCC 23114 / DSM 25592 / NBRC 14850 / NCTC 10111 / PG21) (Mycoplasma hominis)).